The sequence spans 354 residues: UDP-3-O-acylglucosamine N-acyltransferase (354 aa).

The active-site Proton acceptor is the H258.

This sequence belongs to the transferase hexapeptide repeat family. LpxD subfamily. As to quaternary structure, homotrimer.

It catalyses the reaction a UDP-3-O-[(3R)-3-hydroxyacyl]-alpha-D-glucosamine + a (3R)-hydroxyacyl-[ACP] = a UDP-2-N,3-O-bis[(3R)-3-hydroxyacyl]-alpha-D-glucosamine + holo-[ACP] + H(+). The protein operates within bacterial outer membrane biogenesis; LPS lipid A biosynthesis. Its function is as follows. Catalyzes the N-acylation of UDP-3-O-acylglucosamine using 3-hydroxyacyl-ACP as the acyl donor. Is involved in the biosynthesis of lipid A, a phosphorylated glycolipid that anchors the lipopolysaccharide to the outer membrane of the cell. This chain is UDP-3-O-acylglucosamine N-acyltransferase, found in Sinorhizobium medicae (strain WSM419) (Ensifer medicae).